The primary structure comprises 212 residues: Large ribosomal subunit protein uL3 (212 aa).

The residue at position 153 (glutamine 153) is an N5-methylglutamine.

It belongs to the universal ribosomal protein uL3 family. Part of the 50S ribosomal subunit. Forms a cluster with proteins L14 and L19. Post-translationally, methylated by PrmB.

Functionally, one of the primary rRNA binding proteins, it binds directly near the 3'-end of the 23S rRNA, where it nucleates assembly of the 50S subunit. The polypeptide is Large ribosomal subunit protein uL3 (Shewanella woodyi (strain ATCC 51908 / MS32)).